The following is a 69-amino-acid chain: MSDFENKIEELGGKAKEAVGEATENEQLADEGRADQTKADVKQAVSDAGDKIKGAADKVLGSFQKDEEN.

Composition is skewed to basic and acidic residues over residues 1–19 and 30–41; these read MSDFENKIEELGGKAKEAV and DEGRADQTKADV. The interval 1–42 is disordered; it reads MSDFENKIEELGGKAKEAVGEATENEQLADEGRADQTKADVK.

It belongs to the UPF0337 (CsbD) family.

The protein is UPF0337 protein DIP1660 of Corynebacterium diphtheriae (strain ATCC 700971 / NCTC 13129 / Biotype gravis).